Here is a 21-residue protein sequence, read N- to C-terminus: Bradykinin-potentiating peptide K12 (21 aa).

The tract at residues 1 to 21 is disordered; the sequence is LRDYANRVINGGPVEAAGPPA.

As to expression, expressed by the venom gland.

The protein localises to the secreted. In terms of biological role, inhibits angiotensin-converting enzyme (ACE), but does not serve as substrate for the enzyme. Potentiate bradykinin (BK) on the isolated guinea pig ileum as well as the isolated rat uterus for contraction. Also potentiates in vivo the depressor effect of BK on arterial blood pressure in the normotensive anesthetized rat. Intracerebroventricular injection into mice does not show toxic activity. This Buthus occitanus (Common European scorpion) protein is Bradykinin-potentiating peptide K12.